The chain runs to 148 residues: Pseudoazurin (148 aa).

The first 25 residues, 1-25 (MMIFRALIAAATLAIAIATTLPAAA), serve as a signal peptide directing secretion. In terms of domain architecture, Plastocyanin-like spans 30–118 (VKMLNSGPGG…MGMVALVVVG (89 aa)). Positions 65, 103, 106, and 111 each coordinate Cu cation.

The cofactor is Cu cation.

The protein resides in the periplasm. The polypeptide is Pseudoazurin (Methylorubrum extorquens (strain ATCC 14718 / DSM 1338 / JCM 2805 / NCIMB 9133 / AM1) (Methylobacterium extorquens)).